The sequence spans 328 residues: uncharacterized protein (328 aa).

The signal sequence occupies residues 1 to 25 (MKLFNFKKLSMLIAGFTLVTSPALA).

This sequence belongs to the bacterial solute-binding protein 7 family.

It is found in the periplasm. This is an uncharacterized protein from Haemophilus influenzae (strain ATCC 51907 / DSM 11121 / KW20 / Rd).